We begin with the raw amino-acid sequence, 54 residues long: Large ribosomal subunit protein bL33 (54 aa).

It belongs to the bacterial ribosomal protein bL33 family.

The protein is Large ribosomal subunit protein bL33 of Chloroflexus aggregans (strain MD-66 / DSM 9485).